The chain runs to 443 residues: Xaa-Pro dipeptidase (443 aa).

D246, D257, H339, E384, and E423 together coordinate Mn(2+).

Belongs to the peptidase M24B family. Bacterial-type prolidase subfamily. Mn(2+) serves as cofactor.

It carries out the reaction Xaa-L-Pro dipeptide + H2O = an L-alpha-amino acid + L-proline. Its function is as follows. Splits dipeptides with a prolyl residue in the C-terminal position. The chain is Xaa-Pro dipeptidase from Pectobacterium carotovorum subsp. carotovorum (strain PC1).